Consider the following 285-residue polypeptide: NAD kinase (285 aa).

Residue Asp66 is the Proton acceptor of the active site. Residues 66 to 67 (DG), 137 to 138 (ND), Arg148, Arg165, Asp167, and 178 to 183 (TAYSMS) each bind NAD(+).

This sequence belongs to the NAD kinase family. A divalent metal cation is required as a cofactor.

The protein localises to the cytoplasm. The enzyme catalyses NAD(+) + ATP = ADP + NADP(+) + H(+). In terms of biological role, involved in the regulation of the intracellular balance of NAD and NADP, and is a key enzyme in the biosynthesis of NADP. Catalyzes specifically the phosphorylation on 2'-hydroxyl of the adenosine moiety of NAD to yield NADP. This chain is NAD kinase, found in Chlorobium phaeobacteroides (strain DSM 266 / SMG 266 / 2430).